The sequence spans 254 residues: Small ribosomal subunit protein uS2 (254 aa).

This sequence belongs to the universal ribosomal protein uS2 family.

The polypeptide is Small ribosomal subunit protein uS2 (Borrelia hermsii (strain HS1 / DAH)).